Consider the following 279-residue polypeptide: Bifunctional protein FolD (279 aa).

NADP(+)-binding positions include 166 to 168 and Ser-191; that span reads GRS.

It belongs to the tetrahydrofolate dehydrogenase/cyclohydrolase family. Homodimer.

It catalyses the reaction (6R)-5,10-methylene-5,6,7,8-tetrahydrofolate + NADP(+) = (6R)-5,10-methenyltetrahydrofolate + NADPH. It carries out the reaction (6R)-5,10-methenyltetrahydrofolate + H2O = (6R)-10-formyltetrahydrofolate + H(+). Its pathway is one-carbon metabolism; tetrahydrofolate interconversion. Its function is as follows. Catalyzes the oxidation of 5,10-methylenetetrahydrofolate to 5,10-methenyltetrahydrofolate and then the hydrolysis of 5,10-methenyltetrahydrofolate to 10-formyltetrahydrofolate. The chain is Bifunctional protein FolD from Shouchella clausii (strain KSM-K16) (Alkalihalobacillus clausii).